The following is an 826-amino-acid chain: Beta-galactosidase 7 (826 aa).

The N-terminal stretch at 1–25 (MKMKHFTRLLSLFFILITSLSLAKS) is a signal peptide. Asn-154 is a glycosylation site (N-linked (GlcNAc...) asparagine). Glu-184 acts as the Proton donor in catalysis. The Nucleophile role is filled by Glu-253. N-linked (GlcNAc...) asparagine glycans are attached at residues Asn-254, Asn-351, Asn-380, Asn-491, Asn-665, Asn-706, Asn-797, and Asn-801. In terms of domain architecture, SUEL-type lectin spans 740 to 826 (AHEHNKVELS…PKKLAVELEC (87 aa)).

It belongs to the glycosyl hydrolase 35 family. As to expression, expressed in flowers.

The protein resides in the secreted. It is found in the extracellular space. It localises to the apoplast. The catalysed reaction is Hydrolysis of terminal non-reducing beta-D-galactose residues in beta-D-galactosides.. In Arabidopsis thaliana (Mouse-ear cress), this protein is Beta-galactosidase 7 (BGAL7).